Consider the following 574-residue polypeptide: Fusion glycoprotein F0 (574 aa).

The first 25 residues, 1-25 (MELPILKANAITTILAAVTFCFASS), serve as a signal peptide directing secretion. Over 26-524 (QNITEEFYQS…HVNAGKSTTN (499 aa)) the chain is Extracellular. N-linked (GlcNAc...) asparagine; by host glycans are attached at residues asparagine 27 and asparagine 70. 7 disulfides stabilise this stretch: cysteine 37–cysteine 439, cysteine 69–cysteine 212, cysteine 313–cysteine 343, cysteine 322–cysteine 333, cysteine 358–cysteine 367, cysteine 382–cysteine 393, and cysteine 416–cysteine 422. Residues 76 to 96 (VKLINQELDKYKNAVTELQLL) adopt a coiled-coil conformation. N-linked (GlcNAc...) asparagine; by host glycosylation is found at asparagine 116, asparagine 120, and asparagine 126. The segment at 137–157 (FLGFLLGVGSAIASGIAVSKV) is fusion peptide. Residues 158 to 209 (LHLEGEVNKIKSALLSTNKAVVSLSNGVSVLTSKVLDLKNYIDKQLLPIVNK) are a coiled coil. Residues 481-516 (LVFPSDEFDASISQVNEKINQSLAFIRKSDELLHHV) adopt a coiled-coil conformation. The N-linked (GlcNAc...) asparagine; by host glycan is linked to asparagine 500. A helical membrane pass occupies residues 525 to 550 (IMITTIIIVIIVILLSLIAVGLLLYC). A lipid anchor (S-palmitoyl cysteine; by host) is attached at cysteine 550. The Cytoplasmic segment spans residues 551–574 (KARSTPVTLSKDQLSGINNIAFSN).

This sequence belongs to the paramyxoviruses fusion glycoprotein family. Homotrimer. Heterodimer with fusion protein F2; disulfide-linked. Interacts with host NCL; this interaction plays a role in viral entry into the host cell. As a heterodimer with F2, interacts with host heparan sulfate. As a heterodimer with F2, interacts with host IGF1R; this interaction activates PRKCZ/PKCzeta that recruits NCL/nucleolin from the host nucleus to the plasma membrane. Part of a complex composed of F1, F2 and G glycoproteins. As a heterodimer with F2, interacts with host RHOA; this interaction facilitates virus-induced syncytium formation. In terms of assembly, homotrimer. Heterodimer with fusion protein F1; disulfide-linked. As a heterodimer with F1, interacts with host heparan sulfate. As a heterodimer with F1, interacts with host IGF1R; this interaction activates PRKCZ/PKCzeta that recruits NCL/nucleolin from the host nucleus to the plasma membrane. Part of a complex composed of F1, F2 and G glycoproteins. As a heterodimer with F1, interacts with host RHOA; this interaction facilitates virus-induced syncytium formation. Post-translationally, the F glycoprotein is synthesized as a F0 inactive precursor that is heavily N-glycosylated and processed at two sites by a host furin-like protease probably in the Golgi. The cleavage site between p27 and F1 may occur after endocytosis to yield the mature F1 and F2 proteins. Both cleavages are required for membrane fusion and p27 is released from the processed protein.

The protein resides in the host Golgi apparatus membrane. Its subcellular location is the virion membrane. It localises to the host cell membrane. Functionally, inactive precursor that is cleaved at two sites by a furin-like protease to give rise to the mature F1 and F2 fusion glycoproteins. Its function is as follows. Class I viral fusion protein. Under the current model, the protein has at least 3 conformational states: pre-fusion native state, pre-hairpin intermediate state, and post-fusion hairpin state. During viral and plasma cell membrane fusion, the coiled coil regions assume a trimer-of-hairpins structure, positioning the fusion peptide in close proximity to the C-terminal region of the ectodomain. The formation of this structure appears to drive apposition and subsequent fusion of viral and cellular membranes leading to delivery of the nucleocapsid into the cytoplasm. This fusion is pH independent and occurs at the plasma or endosomal membrane. The trimer of F1-F2 (F protein) also facilitates the attachment to host cell by binding to host heparan sulfate. F protein is involved in the entry into the host cell through the interaction with host IGF1R. This interaction activates PRKCZ/PKCzeta that recruits host NCL/nucleolin to the apical cell surface where it can bind fusion glycoprotein F1. Later in infection, F protein expressed at the plasma membrane of infected cells can mediate fusion with adjacent cells to form syncytia, a cytopathic effect that could lead to tissue necrosis. F protein may trigger p53-dependent apoptosis. In terms of biological role, major determinant of the species specificity of RSV infection. The trimer of F1-F2 (F protein) also facilitates the attachment to host cell by binding to host heparan sulfate. F protein is involved in the entry into the host cell through the interaction with host IGF1R. This interaction activates PRKCZ/PKCzeta that recruits host NCL/nucleolin to the apical cell surface where it can bind fusion glycoprotein F1. Later in infection, F protein expressed at the plasma membrane of infected cells can mediate fusion with adjacent cells to form syncytia, a cytopathic effect that could lead to tissue necrosis. F protein seems to trigger p53-dependent apoptosis. The chain is Fusion glycoprotein F0 (F) from Homo sapiens (Human).